Consider the following 354-residue polypeptide: MYGGKSAEHNVSLQTALAVTKALNTEKFDIHPIYITEKGEWQRGPLLTEPVSNVKMLQLEQNGESFALSALNREMFPEASPDEKAPIDVVFPLLHGPNGEDGTIQGLLELLNVPYVGNGVLASSAGMDKVIMKHLFAQAGLPQAKYAAFLKKDWKQTPDSCLQQVEKELGYPCFVKPANLGSSVGISKCRNREELEKAFELAFEYDRKIVVEEGIAGREIEIGVLGNDEPKCSAVGEIAPKTDFYDYKAKYEDGDTDLMIPAQVTDEQYAEISEMAIKAFKAIDGSGLVRADFFLTNDGQVLINEVNTMPGFTPFSMFPLLWKEAGVDYSDLIEQLVELAKERHAEKQLIKHTF.

The ATP-grasp domain maps to 133–338 (KHLFAQAGLP…YSDLIEQLVE (206 aa)). 166–221 (EKELGYPCFVKPANLGSSVGISKCRNREELEKAFELAFEYDRKIVVEEGIAGREIE) contributes to the ATP binding site. Mg(2+) contacts are provided by Asp292, Glu305, and Asn307.

It belongs to the D-alanine--D-alanine ligase family. It depends on Mg(2+) as a cofactor. Mn(2+) serves as cofactor.

It localises to the cytoplasm. The catalysed reaction is 2 D-alanine + ATP = D-alanyl-D-alanine + ADP + phosphate + H(+). The protein operates within cell wall biogenesis; peptidoglycan biosynthesis. In terms of biological role, cell wall formation. This chain is D-alanine--D-alanine ligase, found in Bacillus velezensis (strain DSM 23117 / BGSC 10A6 / LMG 26770 / FZB42) (Bacillus amyloliquefaciens subsp. plantarum).